The primary structure comprises 338 residues: Ferredoxin--NADP reductase (338 aa).

Threonine 14, aspartate 33, glutamine 41, tyrosine 46, valine 86, phenylalanine 120, aspartate 284, and threonine 325 together coordinate FAD.

Belongs to the ferredoxin--NADP reductase type 2 family. In terms of assembly, homodimer. FAD serves as cofactor.

The catalysed reaction is 2 reduced [2Fe-2S]-[ferredoxin] + NADP(+) + H(+) = 2 oxidized [2Fe-2S]-[ferredoxin] + NADPH. This is Ferredoxin--NADP reductase from Pelagibacter ubique (strain HTCC1062).